Consider the following 591-residue polypeptide: Developmental and secondary metabolism regulator VEA1 (591 aa).

A disordered region spans residues 1–22; the sequence is MATKASSILHPPNETEHTMSRI. The span at 13–22 shows a compositional bias: basic and acidic residues; sequence NETEHTMSRI. The region spanning 26–235 is the Velvet domain; sequence GKKLTYNLKV…AEQGCRVRIR (210 aa). The Nuclear localization signal signature appears at 40–45; it reads ERARAC. The disordered stretch occupies residues 238–547; that stretch reads VRMRRREPKP…TSGGSDDEIM (310 aa). The segment covering 245-260 has biased composition (basic and acidic residues); it reads PKPNKDYGAYDDRRIT. Polar residues predominate over residues 306 to 321; the sequence is HQQPSPNLAATPQSHL. Positions 330–347 are enriched in pro residues; that stretch reads YHAPPPPPTAHPAPPPAY. Over residues 386–395 the composition is skewed to polar residues; sequence YDQSKSSLPM. Residues 422-433 show a composition bias toward low complexity; that stretch reads PSQLHPTQQYQQ. Residues 434–448 show a composition bias toward pro residues; it reads PTPPPPPPAAIAPHP. Residues 452-493 are PEST; that stretch reads RTPTKPSPSTFFPPTPSRLSVEVDSSNEADDAILNAIRTRRG. The segment covering 494-516 has biased composition (basic and acidic residues); the sequence is YILDEKSGATKRSRDSSDHDLKP.

This sequence belongs to the velvet family. VeA subfamily. As to quaternary structure, component of the heterotrimeric velvet complex composed of LAE1, VEA1 and VEL2; VEA1 acting as a bridging protein between LAE1 and VEL2.

It localises to the nucleus. It is found in the cytoplasm. Functionally, component of the velvet transcription factor complex that controls sexual/asexual developmental ratio in response to light, promoting sexual development in the darkness while stimulating asexual sporulation under illumination. The velvet complex hat acts as a global regulator for secondary metabolite gene expression. Regulates cleistothecial formation and hyphal growth. Acts as a positive regulator of virulence. In Ajellomyces capsulatus (Darling's disease fungus), this protein is Developmental and secondary metabolism regulator VEA1.